Consider the following 377-residue polypeptide: Killer cell immunoglobulin-like receptor 2DL4 (377 aa).

An N-terminal signal peptide occupies residues 1 to 21; the sequence is MSMSPTVIILACLGFFLDQSV. Residues 22 to 242 are Extracellular-facing; the sequence is WAHVGGQDKP…FKTGIARHLH (221 aa). Ig-like C2-type domains lie at 44-104 and 139-202; these read GGHV…HPHS and GENV…FHGS. A disulfide bridge connects residues cysteine 51 and cysteine 97. 2 N-linked (GlcNAc...) asparagine glycosylation sites follow: asparagine 141 and asparagine 175. Cysteine 146 and cysteine 195 form a disulfide bridge. Residues 243 to 263 form a helical membrane-spanning segment; it reads AVIRYSVAIILFTILPFFLLH. The Cytoplasmic segment spans residues 264–377; sequence RWCSKKKDAA…ASSNVPAAGI (114 aa). Residues 338–377 are disordered; the sequence is PRALSPAHEHHSQALMGSSRETTALSQTQLASSNVPAAGI. Over residues 352 to 377 the composition is skewed to polar residues; that stretch reads LMGSSRETTALSQTQLASSNVPAAGI.

The protein belongs to the immunoglobulin superfamily. Interacts with peptide-bound HLA-G-B2M heterotrimeric complex. Interacts with ARRB2. In terms of tissue distribution, expressed in decidual NK cells and innate lymphoid cell type I (ILC1). Expressed in a subset of peripheral NK cells.

The protein resides in the cell membrane. It is found in the early endosome membrane. In terms of biological role, receptor for non-classical major histocompatibility class Ib HLA-G molecules. Recognizes HLA-G in complex with B2M/beta-2 microglobulin and a nonamer self-peptide (peptide-bound HLA-G-B2M). In decidual NK cells, binds peptide-bound HLA-G-B2M complex and triggers NK cell senescence-associated secretory phenotype as a molecular switch to promote vascular remodeling and fetal growth in early pregnancy. May play a role in balancing tolerance and antiviral-immunity at maternal-fetal interface by keeping in check the effector functions of NK, CD8+ T cells and B cells. Upon interaction with peptide-bound HLA-G-B2M, initiates signaling from the endosomal compartment leading to downstream activation of PRKDC-XRCC5 and AKT1, and ultimately triggering NF-kappa-B-dependent pro-inflammatory response. The polypeptide is Killer cell immunoglobulin-like receptor 2DL4 (Homo sapiens (Human)).